A 691-amino-acid polypeptide reads, in one-letter code: MKIVLQNNEQDCLLACYSMILGYFGRDVAIHELYSGEMIPPDGLSVSYLKNINMKHQVSMHVYKTDKKNSPNKIFYPKMLPVIIQWNDNHFVVVTKIYRKNVTLIDPAIGKVKYNYNDFMKKFSGYIITLSPNSSFTKKKRISEIIFPLKKIFKNRNTFLYIFSLFISQIVALWFSIILRDILNKSHDITYSFIMMISLVLFQTLSLLMKLGAQKNTNLLYESKISRQIFKGIFSRPLLYFRNNSVGTIIEKINLRTGIRDGILLKIFPSLLNFFTVFIVIIYLGTISFTLTLFLVIMNLLYMIFSFSLISIKRQANIQYTQQTIDFTSVVQEDLNQIEQIKAQANEKECVKRWTKKSAQTIFSYNKILNIDGITSAFNQGFNYICVILMMIFGIYLNQGNLVSIPDLIIFQSGISLFVSAVNQIQDVMFEISRLSIYGNKISDLLIENPQRIDNIEKHSNNAIILKDISYSYELNNYIFNNINFSIKKGEKIAIVGKSGSGKSTLFNILLGLISYEGEVTYGYENLRQIIGVVSQNMNLRKGSLIENIVSNNNSEELDIQKINDVLKDVNMLELVDSLPQKIFSQLFENGKNLSGGQIQRLLIAKSLLNNNKFIFWDEPFSSLDNQNRIHIYKNVLENPDYKSQTIIMISHHLDVLKYVDRVIYIDDKKIMIDKHNNLLLNDSYNSFVNE.

Residues 6–130 form the Peptidase C39 domain; sequence QNNEQDCLLA…KKFSGYIITL (125 aa). C12 is a catalytic residue. An ABC transmembrane type-1 domain is found at 158–434; it reads TFLYIFSLFI…IQDVMFEISR (277 aa). Transmembrane regions (helical) follow at residues 159–179, 189–209, 262–284, 289–311, and 385–405; these read FLYIFSLFISQIVALWFSIIL, ITYSFIMMISLVLFQTLSLLM, GILLKIFPSLLNFFTVFIVIIYL, FTLTLFLVIMNLLYMIFSFSLIS, and ICVILMMIFGIYLNQGNLVSI. An ABC transporter domain is found at 464 to 689; the sequence is IILKDISYSY…LLNDSYNSFV (226 aa). 497 to 504 provides a ligand contact to ATP; sequence GKSGSGKS.

Belongs to the ABC transporter superfamily.

Its subcellular location is the cell membrane. Probably implicated in the export process of the lantibiotic lacticin-481/lactococcin-DR. The chain is Lacticin-481/lactococcin-DR transport/processing ATP-binding protein lcnDR3 (lcnDR3) from Lactococcus lactis subsp. lactis (Streptococcus lactis).